Here is a 61-residue protein sequence, read N- to C-terminus: Photosystem II reaction center X protein (61 aa).

The chain crosses the membrane as a helical span at residues 26–46 (IGSFIAAALLIVIPATAFLIF).

This sequence belongs to the PsbX family. Type 2 subfamily. In terms of assembly, PSII consists of a core antenna complex that captures photons, and an electron transfer chain that converts photonic excitation into a charge separation. PSII forms dimeric complexes.

It is found in the cellular thylakoid membrane. Its function is as follows. Involved in the binding and/or turnover of quinones at the Q(B) site of Photosystem II. The polypeptide is Photosystem II reaction center X protein (Prochlorococcus marinus (strain MIT 9301)).